The following is a 149-amino-acid chain: Large-conductance mechanosensitive channel (149 aa).

The next 2 membrane-spanning stretches (helical) occupy residues 14–34 (VVDMAVGIIVGGAFGKLVNTL) and 85–105 (GLFINAMISFIIMAFAVYLLV).

Belongs to the MscL family. Homopentamer.

The protein resides in the cell inner membrane. In terms of biological role, channel that opens in response to stretch forces in the membrane lipid bilayer. May participate in the regulation of osmotic pressure changes within the cell. In Chlorobium phaeovibrioides (strain DSM 265 / 1930) (Prosthecochloris vibrioformis (strain DSM 265)), this protein is Large-conductance mechanosensitive channel.